A 368-amino-acid polypeptide reads, in one-letter code: Probable protein phosphatase 2C 58 (368 aa).

The PPM-type phosphatase domain occupies 23 to 329; sequence KFGLSSMQGW…DNMTMILVQF (307 aa). Residues D57, G58, D272, and D320 each contribute to the Mn(2+) site. Positions 336–368 are disordered; the sequence is NKNVSPAEQSAADKQPTGDTHWSEIHVTEESSS. Basic and acidic residues predominate over residues 356-368; sequence HWSEIHVTEESSS.

It belongs to the PP2C family. Mg(2+) serves as cofactor. It depends on Mn(2+) as a cofactor.

The catalysed reaction is O-phospho-L-seryl-[protein] + H2O = L-seryl-[protein] + phosphate. It carries out the reaction O-phospho-L-threonyl-[protein] + H2O = L-threonyl-[protein] + phosphate. The protein is Probable protein phosphatase 2C 58 of Oryza sativa subsp. japonica (Rice).